A 209-amino-acid polypeptide reads, in one-letter code: Small ribosomal subunit protein uS4 (209 aa).

One can recognise an S4 RNA-binding domain in the interval 98-158; that stretch reads SRVDNIVYRL…EKSRSLAAIK (61 aa).

Belongs to the universal ribosomal protein uS4 family. In terms of assembly, part of the 30S ribosomal subunit. Contacts protein S5. The interaction surface between S4 and S5 is involved in control of translational fidelity.

Functionally, one of the primary rRNA binding proteins, it binds directly to 16S rRNA where it nucleates assembly of the body of the 30S subunit. With S5 and S12 plays an important role in translational accuracy. The polypeptide is Small ribosomal subunit protein uS4 (Pseudothermotoga lettingae (strain ATCC BAA-301 / DSM 14385 / NBRC 107922 / TMO) (Thermotoga lettingae)).